Consider the following 227-residue polypeptide: Cytidylate kinase (227 aa).

12–20 (GPSGAGKGT) serves as a coordination point for ATP.

This sequence belongs to the cytidylate kinase family. Type 1 subfamily.

The protein localises to the cytoplasm. It carries out the reaction CMP + ATP = CDP + ADP. It catalyses the reaction dCMP + ATP = dCDP + ADP. This is Cytidylate kinase from Enterobacter sp. (strain 638).